Here is a 250-residue protein sequence, read N- to C-terminus: Undecaprenyl-diphosphatase (250 aa).

A run of 7 helical transmembrane segments spans residues 35–55, 73–93, 100–120, 146–166, 171–191, 200–220, and 229–249; these read DLSVFALLHLATLAAIVIFVG, INLTLKIIVSTIPAAIFGVLL, SLSNLKIISFFFLVTSAALLI, ALAIFPGISRSGFTLFGSLLI, EIALKYSFLVSIPVILGAGLL, SYSISSAIVAFFFGLLSLFIL, and LKIFSAYCIFISIFSFVLGGI.

This sequence belongs to the UppP family.

The protein localises to the cell inner membrane. It catalyses the reaction di-trans,octa-cis-undecaprenyl diphosphate + H2O = di-trans,octa-cis-undecaprenyl phosphate + phosphate + H(+). In terms of biological role, catalyzes the dephosphorylation of undecaprenyl diphosphate (UPP). Confers resistance to bacitracin. This is Undecaprenyl-diphosphatase from Thermosipho melanesiensis (strain DSM 12029 / CIP 104789 / BI429).